A 456-amino-acid chain; its full sequence is Phosphatidylinositol N-acetylglucosaminyltransferase gpi3 subunit (456 aa).

The protein belongs to the glycosyltransferase group 1 family. Glycosyltransferase 4 subfamily. As to quaternary structure, component of a Phosphatidylinositol N-acetylglucosaminyltransferase complex.

It carries out the reaction a 1,2-diacyl-sn-glycero-3-phospho-(1D-myo-inositol) + UDP-N-acetyl-alpha-D-glucosamine = a 6-(N-acetyl-alpha-D-glucosaminyl)-1-(1,2-diacyl-sn-glycero-3-phospho)-1D-myo-inositol + UDP + H(+). The protein operates within glycolipid biosynthesis; glycosylphosphatidylinositol-anchor biosynthesis. In terms of biological role, catalytic subunit in the complex catalyzing the transfer of N-acetylglucosamine from UDP-N-acetylglucosamine to phosphatidylinositol, the first step of GPI biosynthesis. The chain is Phosphatidylinositol N-acetylglucosaminyltransferase gpi3 subunit (gpi3) from Schizosaccharomyces pombe (strain 972 / ATCC 24843) (Fission yeast).